A 947-amino-acid polypeptide reads, in one-letter code: Bifunctional glutamine synthetase adenylyltransferase/adenylyl-removing enzyme (947 aa).

The segment at 1-443 (MQLPSSLVSV…VFETLIGDDE (443 aa)) is adenylyl removase. The adenylyl transferase stretch occupies residues 451-947 (ARHFHELWDM…VKQAWNQWFA (497 aa)).

It belongs to the GlnE family. Mg(2+) is required as a cofactor.

It carries out the reaction [glutamine synthetase]-O(4)-(5'-adenylyl)-L-tyrosine + phosphate = [glutamine synthetase]-L-tyrosine + ADP. The enzyme catalyses [glutamine synthetase]-L-tyrosine + ATP = [glutamine synthetase]-O(4)-(5'-adenylyl)-L-tyrosine + diphosphate. Its function is as follows. Involved in the regulation of glutamine synthetase GlnA, a key enzyme in the process to assimilate ammonia. When cellular nitrogen levels are high, the C-terminal adenylyl transferase (AT) inactivates GlnA by covalent transfer of an adenylyl group from ATP to specific tyrosine residue of GlnA, thus reducing its activity. Conversely, when nitrogen levels are low, the N-terminal adenylyl removase (AR) activates GlnA by removing the adenylyl group by phosphorolysis, increasing its activity. The regulatory region of GlnE binds the signal transduction protein PII (GlnB) which indicates the nitrogen status of the cell. The chain is Bifunctional glutamine synthetase adenylyltransferase/adenylyl-removing enzyme from Vibrio parahaemolyticus serotype O3:K6 (strain RIMD 2210633).